The chain runs to 46 residues: Spectrin alpha chain, non-erythrocytic 1 (46 aa).

Spectrin repeat units lie at residues 1–5, 7–14, 15–20, 21–26, 27–35, and 39–46; these read AQLAD, FHLQQFFR, SQLLGS, AHEVQR, LAQFVEHWK, and DLFLTFAK.

This sequence belongs to the spectrin family. In terms of assembly, associates with the gamma-tubulin complex in brain, but not in kidney, liver, sperm, or uterus. Like erythrocyte spectrin, the spectrin-like proteins are capable of forming dimers which can further associate to tetramers. Interacts with isoform 1 of ACP1. Interacts with CALM and EMD. Interacts (via C-terminal spectrin repeats) with TRPC4. Identified in a complex with ACTN4, CASK, IQGAP1, MAGI2, NPHS1 and SPTBN1. Interacts with CLN3; this interaction regulates the fodrin localization at the plasma membrane.

The protein localises to the cytoplasm. The protein resides in the cytoskeleton. Its subcellular location is the cell cortex. In terms of biological role, fodrin, which seems to be involved in secretion, interacts with calmodulin in a calcium-dependent manner and is thus candidate for the calcium-dependent movement of the cytoskeleton at the membrane. In Capra hircus (Goat), this protein is Spectrin alpha chain, non-erythrocytic 1 (SPTAN1).